Here is a 234-residue protein sequence, read N- to C-terminus: Sugar fermentation stimulation protein homolog (234 aa).

Belongs to the SfsA family.

The chain is Sugar fermentation stimulation protein homolog from Shewanella baltica (strain OS155 / ATCC BAA-1091).